A 176-amino-acid chain; its full sequence is Ribosome maturation factor RimM (176 aa).

Residues glutamate 100–leucine 173 form the PRC barrel domain.

It belongs to the RimM family. In terms of assembly, binds ribosomal protein uS19.

Its subcellular location is the cytoplasm. Functionally, an accessory protein needed during the final step in the assembly of 30S ribosomal subunit, possibly for assembly of the head region. Essential for efficient processing of 16S rRNA. May be needed both before and after RbfA during the maturation of 16S rRNA. It has affinity for free ribosomal 30S subunits but not for 70S ribosomes. The chain is Ribosome maturation factor RimM from Prochlorococcus marinus (strain MIT 9313).